The primary structure comprises 159 residues: NADH-quinone oxidoreductase subunit I (159 aa).

2 4Fe-4S ferredoxin-type domains span residues 51 to 80 and 90 to 119; these read RRYE…IESD and TRYD…EGPN. Residues Cys-60, Cys-63, Cys-66, Cys-70, Cys-99, Cys-102, Cys-105, and Cys-109 each contribute to the [4Fe-4S] cluster site.

The protein belongs to the complex I 23 kDa subunit family. As to quaternary structure, NDH-1 is composed of 14 different subunits. Subunits NuoA, H, J, K, L, M, N constitute the membrane sector of the complex. [4Fe-4S] cluster is required as a cofactor.

It is found in the cell inner membrane. It catalyses the reaction a quinone + NADH + 5 H(+)(in) = a quinol + NAD(+) + 4 H(+)(out). In terms of biological role, NDH-1 shuttles electrons from NADH, via FMN and iron-sulfur (Fe-S) centers, to quinones in the respiratory chain. The immediate electron acceptor for the enzyme in this species is believed to be ubiquinone. Couples the redox reaction to proton translocation (for every two electrons transferred, four hydrogen ions are translocated across the cytoplasmic membrane), and thus conserves the redox energy in a proton gradient. This chain is NADH-quinone oxidoreductase subunit I, found in Rickettsia prowazekii (strain Madrid E).